A 265-amino-acid chain; its full sequence is Proline-rich protein 23B (265 aa).

The span at 1-18 (MVSRPRSPSAFPAPWWGQ) shows a compositional bias: low complexity. 2 disordered regions span residues 1-49 (MVSR…EDPA) and 226-265 (PSSP…LFQA). A compositionally biased stretch (pro residues) spans 226-237 (PSSPLQPLPPSP). A compositionally biased stretch (basic residues) spans 256-265 (CKARRRLFQA).

The protein belongs to the PRR23 family.

This chain is Proline-rich protein 23B (PRR23B), found in Homo sapiens (Human).